A 330-amino-acid chain; its full sequence is Methionyl-tRNA formyltransferase (330 aa).

Residue 112-115 participates in (6S)-5,6,7,8-tetrahydrofolate binding; the sequence is SLLP.

This sequence belongs to the Fmt family.

It catalyses the reaction L-methionyl-tRNA(fMet) + (6R)-10-formyltetrahydrofolate = N-formyl-L-methionyl-tRNA(fMet) + (6S)-5,6,7,8-tetrahydrofolate + H(+). In terms of biological role, attaches a formyl group to the free amino group of methionyl-tRNA(fMet). The formyl group appears to play a dual role in the initiator identity of N-formylmethionyl-tRNA by promoting its recognition by IF2 and preventing the misappropriation of this tRNA by the elongation apparatus. The chain is Methionyl-tRNA formyltransferase from Synechocystis sp. (strain ATCC 27184 / PCC 6803 / Kazusa).